The sequence spans 359 residues: MDSTNQNLTQTEDEAFLFAMQLASASVLPMVLKSALELDLLEIMAKAGPGAAISPSELAAQLPTKNPEAPVMLDRMLRLLATYSVLNCTLRTLPDGRVERLYSLAPVCKLLTKNADGVSVAPLLLMNQDKVLMESWYHLTDAVLDGGVPFNKAYGMTAFEYHGTDPRFNKVFNRGMSDHSTMTMKKILEDYKGFEGLNSIVDVGGGTGATVNMIVSKYPSIKGINFDLSHVIEDAPAYPGVEHVGRDMFVSVPKADAIFMKWICHDWSDEHCLKFLKNCYEALPANGKVLVAECILPETPDTSAATKNAVHVDIVMLAHNPGGKERTEKEFEALAKGAGFTGFRRACCAYQTWVMEFHK.

Met126–Leu132 is a substrate binding site. Residues Ala158–Met176 form a substrate binding region. S-adenosyl-L-methionine contacts are provided by Gly204, Asp227, Asp247, Met248, and Lys261. His265 functions as the Proton acceptor in the catalytic mechanism.

The protein belongs to the class I-like SAM-binding methyltransferase superfamily. Cation-independent O-methyltransferase family. COMT subfamily. As to quaternary structure, homodimer. As to expression, fruit. Not expressed in leaf.

The enzyme catalyses (E)-caffeate + S-adenosyl-L-methionine = (E)-ferulate + S-adenosyl-L-homocysteine + H(+). The protein operates within aromatic compound metabolism; phenylpropanoid biosynthesis. Catalyzes the conversion of caffeic acid to ferulic acid and of 5-hydroxyferulic acid to sinapic acid. The resulting products may subsequently be converted to the corresponding alcohols that are incorporated into lignins. This Capsicum annuum (Capsicum pepper) protein is Caffeic acid 3-O-methyltransferase (COMT).